The primary structure comprises 198 residues: B9 domain-containing protein 1 (198 aa).

Residues 8–126 enclose the C2 B9-type domain; the sequence is FLLNVSGQIE…TIPMFVPESS (119 aa).

The protein belongs to the B9D family. Part of the tectonic-like complex (also named B9 complex).

It is found in the cytoplasm. Its subcellular location is the cytoskeleton. It localises to the cilium basal body. Its function is as follows. Component of the tectonic-like complex, a complex localized at the transition zone of primary cilia and acting as a barrier that prevents diffusion of transmembrane proteins between the cilia and plasma membranes. Required for ciliogenesis and sonic hedgehog/SHH signaling. This Xenopus laevis (African clawed frog) protein is B9 domain-containing protein 1 (b9d1).